The following is a 205-amino-acid chain: uncharacterized protein (205 aa).

The 104-residue stretch at 26 to 129 folds into the HD domain; that stretch reads DWHHVSRVAD…VQDADRLDAI (104 aa).

This is an uncharacterized protein from Bacillus subtilis (strain 168).